The following is a 351-amino-acid chain: Ferrochelatase (351 aa).

Positions 221 and 302 each coordinate Fe cation.

This sequence belongs to the ferrochelatase family.

The protein resides in the cytoplasm. The enzyme catalyses heme b + 2 H(+) = protoporphyrin IX + Fe(2+). The protein operates within porphyrin-containing compound metabolism; protoheme biosynthesis; protoheme from protoporphyrin-IX: step 1/1. Functionally, catalyzes the ferrous insertion into protoporphyrin IX. In Bradyrhizobium sp. (strain BTAi1 / ATCC BAA-1182), this protein is Ferrochelatase.